The sequence spans 436 residues: Eukaryotic peptide chain release factor subunit 1 (436 aa).

This sequence belongs to the eukaryotic release factor 1 family. In terms of assembly, heterodimer of two subunits, one of which binds GTP.

The protein localises to the cytoplasm. Its function is as follows. Directs the termination of nascent peptide synthesis (translation) in response to the termination codons UAA and possibly also UAG and UGA. The chain is Eukaryotic peptide chain release factor subunit 1 (eRF1) from Dileptus margaritifer (Ciliate).